Here is a 214-residue protein sequence, read N- to C-terminus: Probable GTP-binding protein EngB (214 aa).

The EngB-type G domain maps to 22 to 194 (HLPEIAFAGR…WARIDALLEP (173 aa)). Residues 30–37 (GRSNVGKS), 57–61 (GRTQL), 75–78 (DLPG), 142–145 (TKCD), and 173–175 (FSA) each bind GTP. 2 residues coordinate Mg(2+): Ser-37 and Thr-59. The interval 195–214 (TAAETPGIPEEPAPPGPVND) is disordered. Residues 203-214 (PEEPAPPGPVND) are compositionally biased toward pro residues.

It belongs to the TRAFAC class TrmE-Era-EngA-EngB-Septin-like GTPase superfamily. EngB GTPase family. It depends on Mg(2+) as a cofactor.

In terms of biological role, necessary for normal cell division and for the maintenance of normal septation. The protein is Probable GTP-binding protein EngB of Geobacter sp. (strain M21).